The chain runs to 108 residues: Succinate dehydrogenase assembly factor 4, mitochondrial (108 aa).

Over residues 33–46 (NNNNNNNNNNNNNN) the composition is skewed to low complexity. Disordered regions lie at residues 33-59 (NNNN…KENQ) and 79-108 (NPIT…VSDF). A compositionally biased stretch (basic and acidic residues) spans 95–108 (RYNDWERNGRVSDF).

Belongs to the SDHAF4 family. As to quaternary structure, interacts with SdhA in its FAD-bound form.

It localises to the mitochondrion matrix. Functionally, plays an essential role in the assembly of succinate dehydrogenase (SDH), an enzyme complex (also referred to as respiratory complex II) that is a component of both the tricarboxylic acid (TCA) cycle and the mitochondrial electron transport chain, and which couples the oxidation of succinate to fumarate with the reduction of ubiquinone (coenzyme Q) to ubiquinol. Binds to the flavoprotein subunit SdhA in its FAD-bound form, blocking the generation of excess reactive oxygen species (ROS) and facilitating its assembly with the iron-sulfur protein subunit SdhB into the SDH catalytic dimer. The protein is Succinate dehydrogenase assembly factor 4, mitochondrial of Dictyostelium discoideum (Social amoeba).